The following is a 269-amino-acid chain: Small ribosomal subunit protein eS1 (269 aa).

The interval 1–20 (MAVGKNKGVSKGGKKGSKKK) is disordered.

It belongs to the eukaryotic ribosomal protein eS1 family. Component of the small ribosomal subunit. Mature ribosomes consist of a small (40S) and a large (60S) subunit. The 40S subunit contains about 33 different proteins and 1 molecule of RNA (18S). The 60S subunit contains about 49 different proteins and 3 molecules of RNA (28S, 5.8S and 5S).

The protein resides in the cytoplasm. Functionally, has an essential role in oogenesis. This chain is Small ribosomal subunit protein eS1, found in Anopheles gambiae (African malaria mosquito).